A 66-amino-acid chain; its full sequence is Large ribosomal subunit protein uL29 (66 aa).

This sequence belongs to the universal ribosomal protein uL29 family.

The sequence is that of Large ribosomal subunit protein uL29 from Borrelia recurrentis (strain A1).